Consider the following 852-residue polypeptide: Zinc finger and SCAN domain-containing protein 29 (852 aa).

The 83-residue stretch at 18 to 100 (RQRFRRFHYQ…TLVEDLEREP (83 aa)) folds into the SCAN box domain. Disordered stretches follow at residues 96–182 (LERE…PKSG), 347–400 (ASHS…SAAP), and 502–557 (PNDG…RAPV). Lys-112 participates in a covalent cross-link: Glycyl lysine isopeptide (Lys-Gly) (interchain with G-Cter in SUMO2). Ser-153 carries the post-translational modification Phosphoserine. Residue Lys-180 forms a Glycyl lysine isopeptide (Lys-Gly) (interchain with G-Cter in SUMO2) linkage. Over residues 508-517 (ETASCPVQGT) the composition is skewed to polar residues. Acidic residues predominate over residues 528–545 (EADEATEEDSDDDEEDTE). Ser-561 bears the Phosphoserine mark. Lys-576 participates in a covalent cross-link: Glycyl lysine isopeptide (Lys-Gly) (interchain with G-Cter in SUMO2). A disordered region spans residues 603–625 (QGKGNESDCRSGRQWAKTSGEKR). Residue Lys-652 forms a Glycyl lysine isopeptide (Lys-Gly) (interchain with G-Cter in SUMO2) linkage. 6 C2H2-type zinc fingers span residues 678 to 700 (YKCA…RRIH), 706 to 728 (YKCL…RRIH), 734 to 756 (YQCG…QRTH), 762 to 784 (YQCE…RRIH), 790 to 812 (HVCP…HRTH), and 818 to 840 (YGCH…GEIH).

It belongs to the krueppel C2H2-type zinc-finger protein family.

Its subcellular location is the nucleus. Its function is as follows. May be involved in transcriptional regulation. This Homo sapiens (Human) protein is Zinc finger and SCAN domain-containing protein 29 (ZSCAN29).